The primary structure comprises 1197 residues: uncharacterized protein (1197 aa).

This is an uncharacterized protein from Sinorhizobium fredii (strain NBRC 101917 / NGR234).